The primary structure comprises 194 residues: uncharacterized protein (194 aa).

Disordered regions lie at residues 1 to 72 (MAAK…PAAE) and 113 to 194 (VLIP…SLAV). The span at 26–39 (AEGRSSEGRKERTA) shows a compositional bias: basic and acidic residues. Residues 146 to 171 (GSSSTSRNQVASLAYRTQNTAASQPR) are compositionally biased toward polar residues.

This is an uncharacterized protein from Homo sapiens (Human).